The chain runs to 449 residues: Phosphoglucosamine mutase (449 aa).

The active-site Phosphoserine intermediate is the S103. Positions 103, 240, 242, and 244 each coordinate Mg(2+). Residue S103 is modified to Phosphoserine.

This sequence belongs to the phosphohexose mutase family. Mg(2+) serves as cofactor. Activated by phosphorylation.

It carries out the reaction alpha-D-glucosamine 1-phosphate = D-glucosamine 6-phosphate. Its function is as follows. Catalyzes the conversion of glucosamine-6-phosphate to glucosamine-1-phosphate. The chain is Phosphoglucosamine mutase from Thermobifida fusca (strain YX).